The primary structure comprises 2788 residues: E3 ubiquitin-protein ligase UBR5 (2788 aa).

Over residues 68–78 (RLELGKPDNND) the composition is skewed to basic and acidic residues. Residues 68-165 (RLELGKPDNN…DRGSGLLGSQ (98 aa)) form a disordered region. Low complexity predominate over residues 84–101 (SSSGTGRTSRPGRTSDSP). Ser100 is modified (phosphoserine). Over residues 125–134 (GVGGSGGGSS) the composition is skewed to gly residues. The UBA domain maps to 174-216 (VIPEELISQAQVVLQGKSRSVIIRELQRTNLDVNLAVNNLLSR). Ser317 carries the post-translational modification Phosphoserine. Positions 318–337 (FDNERGSTSKEGEPNPDKKN) are enriched in basic and acidic residues. The interval 318–343 (FDNERGSTSKEGEPNPDKKNTPVQSP) is disordered. Phosphoserine is present on residues Ser342 and Ser567. A compositionally biased stretch (basic and acidic residues) spans 572 to 593 (KSMEKASKTIETKPESKQEPVK). Residues 572 to 636 (KSMEKASKTI…PAPKEEEKVN (65 aa)) are disordered. At Ser601 the chain carries Phosphoserine. Residues 603-617 (ASTCSDASSIASSAS) show a composition bias toward low complexity. Thr626 bears the Phosphothreonine mark. A phosphoserine mark is found at Ser797, Ser917, and Ser1007. Disordered stretches follow at residues 988–1024 (AGLGRHEAGASSSDHQDPVSPPIAPPSWVPDPPSMDP) and 1041–1064 (TAATGGGQGPSTSTIPGPSTEPSV). Positions 1006-1022 (VSPPIAPPSWVPDPPSM) are enriched in pro residues. Over residues 1050 to 1062 (PSTSTIPGPSTEP) the composition is skewed to polar residues. A phosphothreonine mark is found at Thr1104 and Thr1124. The UBR-type zinc-finger motif lies at 1166–1234 (DTCSFTWTGA…EKCKCKTLIA (69 aa)). 5 positions are modified to phosphoserine: Ser1216, Ser1297, Ser1344, Ser1364, and Ser1470. The segment at 1288–1308 (REDRNRKTASPDDSDMPDHDL) is disordered. A disordered region spans residues 1504-1729 (SVEPLPPRPS…PSSTSTPAAS (226 aa)). Over residues 1513–1526 (SSDQSSSSSQSQSS) the composition is skewed to low complexity. Residues 1527 to 1542 (YIIRNPQQRRISQSQP) are compositionally biased toward polar residues. Residue Ser1538 is modified to Phosphoserine. 2 stretches are compositionally biased toward acidic residues: residues 1548 to 1563 (EEQDDIVSADVEEVEV) and 1594 to 1603 (HDEDGSDMEL). A compositionally biased stretch (polar residues) spans 1618-1627 (NHSNQDNASG). Low complexity-rich tracts occupy residues 1630–1646 (SVVTAATAGSEAGASSV), 1657–1670 (SNDSSDSDSSSSQS), and 1715–1729 (AASTAPSSTSTPAAS). Thr1725 bears the Phosphothreonine mark. The residue at position 1730 (Ser1730) is a Phosphoserine. A Phosphotyrosine modification is found at Tyr1735. Ser1769 bears the Phosphoserine mark. The tract at residues 1848–1881 (LASAGDPGHPNHPLHASQNSARRERMTAREEASL) is disordered. Positions 1868–1881 (ARRERMTAREEASL) are enriched in basic and acidic residues. A Phosphothreonine modification is found at Thr1959. The disordered stretch occupies residues 1974–2011 (GIDNEDSEHENDDDTSQSATLNDKDDESLPAETGQNHP). Residues 1975 to 1988 (IDNEDSEHENDDDT) show a composition bias toward acidic residues. A phosphoserine mark is found at Ser1980, Ser2016, and Ser2018. Position 2020 is a phosphothreonine (Thr2020). Ser2066 bears the Phosphoserine mark. Residues 2106-2132 (NRQKKAGEDQSMLAEEADSSKPGPSAH) are disordered. Thr2203 is modified (phosphothreonine). Residues Ser2231 and Ser2279 each carry the phosphoserine modification. The tract at residues 2313–2383 (HTSLMQRLRN…SDDPDPLPAH (71 aa)) is disordered. Composition is skewed to basic and acidic residues over residues 2322–2338 (NRGERDREREREREMRR) and 2346–2358 (SRRDRDRDFRRQL). A PABC domain is found at 2367 to 2444 (PASEGNPSDD…AMELIVAHGR (78 aa)). The region spanning 2451-2788 (ILDLGLLDSS…AIKTKNFGFV (338 aa)) is the HECT domain. Residues Ser2459, Ser2473, and Ser2475 each carry the phosphoserine modification. The tract at residues 2463-2490 (VQENRKRHGSSRSVVDMDLDDTDDGDDN) is disordered. Residues 2479–2489 (MDLDDTDDGDD) show a composition bias toward acidic residues. Catalysis depends on Cys2757, which acts as the Glycyl thioester intermediate.

Belongs to the UBR5 family. Homotetramer; composed of a dimer of dimers. Associates with CDK9 and TFIIS/TCEA1 and forms a transcription regulatory complex made of CDK9, RNAP II, UBR5 and TFIIS/TCEA1 that can stimulate target gene transcription (e.g. gamma fibrinogen/FGG) by recruiting their promoters. Associates with the E3 ligase complex containing DYRK2, EDD/UBR5, DDB1 and DCAF1 proteins (EDVP complex). Binds TOPBP1. Interacts with PIH1D1. Interacts with CIB1. As to expression, highest levels found in testis. Also present in liver, kidney, lung and brain.

Its subcellular location is the nucleus. The protein resides in the cytoplasm. It catalyses the reaction S-ubiquitinyl-[E2 ubiquitin-conjugating enzyme]-L-cysteine + [acceptor protein]-L-lysine = [E2 ubiquitin-conjugating enzyme]-L-cysteine + N(6)-ubiquitinyl-[acceptor protein]-L-lysine.. It functions in the pathway protein modification; protein ubiquitination. Functionally, E3 ubiquitin-protein ligase involved in different protein quality control pathways in the cytoplasm and nucleus. Mainly acts as a ubiquitin chain elongator that extends pre-ubiquitinated substrates. Component of the N-end rule pathway: ubiquitinates proteins bearing specific N-terminal residues that are destabilizing according to the N-end rule, leading to their degradation. Recognizes type-1 N-degrons, containing positively charged amino acids (Arg, Lys and His). Together with UBR4, part of a cytoplasm protein quality control pathway that prevents protein aggregation by catalyzing assembly of heterotypic 'Lys-11'-/'Lys-48'-linked branched ubiquitin chains on aggregated proteins, leading to substrate recognition by the segregase p97/VCP and degradation by the proteasome: UBR5 is probably branching multiple 'Lys-48'-linked chains of substrates initially modified with mixed conjugates by UBR4. Together with ITCH, catalyzes 'Lys-48'-/'Lys-63'-branched ubiquitination of TXNIP, leading to its degradation: UBR5 mediates branching of 'Lys-48'-linked chains of substrates initially modified with 'Lys-63'-linked conjugates by ITCH. Catalytic component of a nuclear protein quality control pathway that mediates ubiquitination and degradation of unpaired transcription factors (i.e. transcription factors that are not assembled into functional multiprotein complexes): specifically recognizes and binds degrons that are not accessible when transcription regulators are associated with their coactivators. Ubiquitinates various unpaired transcription regulator (MYC, SUPT4H1, SUPT5H, CDC20 and MCRS1), as well as ligand-bound nuclear receptors (ESR1, NR1H3, NR3C1, PGR, RARA, RXRA AND VDR) that are not associated with their nuclear receptor coactivators (NCOAs). Involved in maturation and/or transcriptional regulation of mRNA by mediating polyubiquitination and activation of CDK9. Also acts as a regulator of DNA damage response by acting as a suppressor of RNF168, an E3 ubiquitin-protein ligase that promotes accumulation of 'Lys-63'-linked histone H2A and H2AX at DNA damage sites, thereby acting as a guard against excessive spreading of ubiquitinated chromatin at damaged chromosomes. Regulates DNA topoisomerase II binding protein (TopBP1) in the DNA damage response. Ubiquitinates acetylated PCK1. Acts as a positive regulator of the canonical Wnt signaling pathway by mediating (1) ubiquitination and stabilization of CTNNB1, and (2) 'Lys-48'-linked ubiquitination and degradation of TLE3. Promotes disassembly of the mitotic checkpoint complex (MCC) from the APC/C complex by catalyzing ubiquitination of BUB1B, BUB3 and CDC20. Plays an essential role in extraembryonic development. Required for the maintenance of skeletal tissue homeostasis by acting as an inhibitor of hedgehog (HH) signaling. The sequence is that of E3 ubiquitin-protein ligase UBR5 (Ubr5) from Rattus norvegicus (Rat).